A 468-amino-acid polypeptide reads, in one-letter code: Methylenetetrahydrofolate--tRNA-(uracil-5-)-methyltransferase TrmFO (468 aa).

10-15 (GGGLAG) lines the FAD pocket.

This sequence belongs to the MnmG family. TrmFO subfamily. FAD serves as cofactor.

It is found in the cytoplasm. It carries out the reaction uridine(54) in tRNA + (6R)-5,10-methylene-5,6,7,8-tetrahydrofolate + NADH + H(+) = 5-methyluridine(54) in tRNA + (6S)-5,6,7,8-tetrahydrofolate + NAD(+). The catalysed reaction is uridine(54) in tRNA + (6R)-5,10-methylene-5,6,7,8-tetrahydrofolate + NADPH + H(+) = 5-methyluridine(54) in tRNA + (6S)-5,6,7,8-tetrahydrofolate + NADP(+). Functionally, catalyzes the folate-dependent formation of 5-methyl-uridine at position 54 (M-5-U54) in all tRNAs. In Chelativorans sp. (strain BNC1), this protein is Methylenetetrahydrofolate--tRNA-(uracil-5-)-methyltransferase TrmFO.